Here is a 299-residue protein sequence, read N- to C-terminus: 21S rRNA pseudouridine(2819) synthase (299 aa).

Residue Asp106 is part of the active site.

This sequence belongs to the pseudouridine synthase RluA family.

The protein resides in the mitochondrion. The catalysed reaction is uridine(2819) in 21S rRNA = pseudouridine(2819) in 21S rRNA. Pseudouridylate synthase responsible for the pseudouridine-2819 formation in mitochondrial 21S rRNA. May modulate the efficiency or the fidelity of the mitochondrial translation machinery. This chain is 21S rRNA pseudouridine(2819) synthase (PUS5), found in Kluyveromyces lactis (strain ATCC 8585 / CBS 2359 / DSM 70799 / NBRC 1267 / NRRL Y-1140 / WM37) (Yeast).